The primary structure comprises 135 residues: Protein PsiE homolog (135 aa).

The next 4 membrane-spanning stretches (helical) occupy residues 20–40 (VGLL…TIHL), 54–74 (YLLI…ALIV), 82–102 (HFPL…LIIV), and 107–127 (PIDT…LYLA).

This sequence belongs to the PsiE family.

It localises to the cell inner membrane. The polypeptide is Protein PsiE homolog (Serratia proteamaculans (strain 568)).